A 309-amino-acid chain; its full sequence is MLPIAIFIIGPTASGKTNLAIKLRQKLPVEIISVDSALIYRGMDIGTAKPNHEELTQAPHRLINICDPAESYSTANFCLDALNEMTVITAAGRIPLLVGGTMLYFKSLLHGLSPLPPANVEIRTLIQREAKAVGWAALHQKLKKIDLVAANRIHPNDSYRLLRALEVFLVSGNTLTEMIQKSGNALKYQVYQFAIMPVNRSLLHDRITRRFHQMLANGFEYEVSQLFARTDLNTNMSSIRCVGYRQMWSYLAGETNYHEMIFRAISATRKLAKHQITWLKSWQNICWLDSEQQDMALNKILQMISKHIS.

Residue 10–17 (GPTASGKT) participates in ATP binding. 12-17 (TASGKT) is a substrate binding site. Interaction with substrate tRNA regions lie at residues 35–38 (DSAL) and 240–245 (RCVGYR).

This sequence belongs to the IPP transferase family. As to quaternary structure, monomer. Requires Mg(2+) as cofactor.

The catalysed reaction is adenosine(37) in tRNA + dimethylallyl diphosphate = N(6)-dimethylallyladenosine(37) in tRNA + diphosphate. Functionally, catalyzes the transfer of a dimethylallyl group onto the adenine at position 37 in tRNAs that read codons beginning with uridine, leading to the formation of N6-(dimethylallyl)adenosine (i(6)A). In Baumannia cicadellinicola subsp. Homalodisca coagulata, this protein is tRNA dimethylallyltransferase.